A 174-amino-acid polypeptide reads, in one-letter code: Inactive protein RESTRICTED TEV MOVEMENT 1 (174 aa).

One can recognise a Jacalin-type lectin domain in the interval 1-152 (MKIGPVGKHD…LQYIGVYLRP (152 aa)).

This sequence belongs to the jacalin lectin family. As to quaternary structure, self-interacts. Interacts with RTM3.

It is found in the cytoplasm. Its function is as follows. Unable to mediate restriction of long-distance movement of the pathogenic tobacco etch virus (TEV) without causing a hypersensitive response or inducing systemic acquired resistance. The protein is Inactive protein RESTRICTED TEV MOVEMENT 1 (RTM1) of Arabidopsis thaliana (Mouse-ear cress).